Consider the following 333-residue polypeptide: Cell division protein FtsQ (333 aa).

The tract at residues 1-99 is disordered; it reads MTGTGPHGDP…ARREAKRRAV (99 aa). Over 1–118 the chain is Cytoplasmic; it reads MTGTGPHGDP…VPRNTIRGLK (118 aa). A compositionally biased stretch (acidic residues) spans 11 to 22; that stretch reads AEDPAGPDDTAA. The span at 44–57 shows a compositional bias: low complexity; sequence TTETTAQTGTTAEA. Positions 73 to 92 are enriched in basic and acidic residues; sequence ERAERRAARDRAMAIEQARR. Residues 119–139 form a helical membrane-spanning segment; that stretch reads VLMWAALVSVLAVALGLLLYF. Over 140–333 the chain is Extracellular; the sequence is TPIMSARNVE…VSSPDLPTVK (194 aa). A POTRA domain is found at 143–211; sequence MSARNVEVSG…STLKISIVER (69 aa).

It belongs to the FtsQ/DivIB family. FtsQ subfamily.

Its subcellular location is the cell membrane. Essential cell division protein. The protein is Cell division protein FtsQ of Mycolicibacterium smegmatis (strain ATCC 700084 / mc(2)155) (Mycobacterium smegmatis).